The following is a 764-amino-acid chain: 5-methyltetrahydropteroyltriglutamate--homocysteine methyltransferase (764 aa).

Residues 16 to 19 (RELK) and Lys-115 contribute to the 5-methyltetrahydropteroyltri-L-glutamate site. Residues 435-437 (IGS) and Glu-488 each bind L-homocysteine. Residues 435–437 (IGS) and Glu-488 each bind L-methionine. 5-methyltetrahydropteroyltri-L-glutamate is bound by residues 519–520 (RC) and Trp-565. Asp-603 contributes to the L-homocysteine binding site. Asp-603 serves as a coordination point for L-methionine. Glu-609 contacts 5-methyltetrahydropteroyltri-L-glutamate. Residues His-645, Cys-647, and Glu-669 each contribute to the Zn(2+) site. His-698 serves as the catalytic Proton donor. Cys-730 is a binding site for Zn(2+).

It belongs to the vitamin-B12 independent methionine synthase family. It depends on Zn(2+) as a cofactor.

The catalysed reaction is 5-methyltetrahydropteroyltri-L-glutamate + L-homocysteine = tetrahydropteroyltri-L-glutamate + L-methionine. Its pathway is amino-acid biosynthesis; L-methionine biosynthesis via de novo pathway; L-methionine from L-homocysteine (MetE route): step 1/1. Its function is as follows. Catalyzes the transfer of a methyl group from 5-methyltetrahydrofolate to homocysteine resulting in methionine formation. In Burkholderia mallei (strain NCTC 10247), this protein is 5-methyltetrahydropteroyltriglutamate--homocysteine methyltransferase.